The chain runs to 152 residues: Nucleoside diphosphate kinase (152 aa).

Positions 11, 59, 87, 93, 104, and 114 each coordinate ATP. Residue His-117 is the Pros-phosphohistidine intermediate of the active site.

It belongs to the NDK family. In terms of assembly, homotetramer. It depends on Mg(2+) as a cofactor.

It localises to the cytoplasm. The catalysed reaction is a 2'-deoxyribonucleoside 5'-diphosphate + ATP = a 2'-deoxyribonucleoside 5'-triphosphate + ADP. The enzyme catalyses a ribonucleoside 5'-diphosphate + ATP = a ribonucleoside 5'-triphosphate + ADP. In terms of biological role, major role in the synthesis of nucleoside triphosphates other than ATP. The ATP gamma phosphate is transferred to the NDP beta phosphate via a ping-pong mechanism, using a phosphorylated active-site intermediate. The polypeptide is Nucleoside diphosphate kinase (Prochlorococcus marinus (strain MIT 9313)).